We begin with the raw amino-acid sequence, 565 residues long: Hemagglutinin-neuraminidase (565 aa).

The Intravirion segment spans residues 1 to 19; it reads MVAEDAPVRGTCRVLFRTT. The helical transmembrane segment at 20 to 40 threads the bilayer; sequence TLLFLCTLLSLSISILYESLI. The Virion surface portion of the chain corresponds to 41-565; sequence TQNQIMSQAG…VPFIRQVTLS (525 aa). N-linked (GlcNAc...) asparagine; by host glycosylation is found at Asn110 and Asn139. Cystine bridges form between Cys161–Cys185, Cys175–Cys236, and Cys227–Cys240. Positions 223–228 are involved in neuraminidase activity; it reads NRKSCS. The N-linked (GlcNAc...) asparagine; by host glycan is linked to Asn267. Intrachain disulfides connect Cys333/Cys454, Cys365/Cys375, and Cys448/Cys458. Asn504 is a glycosylation site (N-linked (GlcNAc...) asparagine; by host). Cys528 and Cys539 are joined by a disulfide.

Belongs to the paramyxoviruses hemagglutinin-neuraminidase family. In terms of assembly, homotetramer; composed of disulfide-linked homodimers. Interacts with F protein trimer.

It is found in the virion membrane. The protein resides in the host cell membrane. The catalysed reaction is Hydrolysis of alpha-(2-&gt;3)-, alpha-(2-&gt;6)-, alpha-(2-&gt;8)- glycosidic linkages of terminal sialic acid residues in oligosaccharides, glycoproteins, glycolipids, colominic acid and synthetic substrates.. Functionally, attaches the virus to sialic acid-containing cell receptors and thereby initiating infection. Binding of HN protein to the receptor induces a conformational change that allows the F protein to trigger virion/cell membranes fusion. In terms of biological role, neuraminidase activity ensures the efficient spread of the virus by dissociating the mature virions from the neuraminic acid containing glycoproteins. The sequence is that of Hemagglutinin-neuraminidase (HN) from Canis lupus familiaris (Dog).